Reading from the N-terminus, the 447-residue chain is tRNA-2-methylthio-N(6)-dimethylallyladenosine synthase (447 aa).

Residues 8–126 (KKVVTLAYGC…FQRLLEEAEE (119 aa)) enclose the MTTase N-terminal domain. Residues cysteine 17, cysteine 53, cysteine 87, cysteine 162, cysteine 166, and cysteine 169 each contribute to the [4Fe-4S] cluster site. The Radical SAM core domain maps to 148-378 (AKGKLKAYVN…ITVQNAQSLA (231 aa)). One can recognise a TRAM domain in the interval 381 to 444 (QEMIGKTCEV…SWTLFGECRA (64 aa)).

The protein belongs to the methylthiotransferase family. MiaB subfamily. Monomer. The cofactor is [4Fe-4S] cluster.

It localises to the cytoplasm. The catalysed reaction is N(6)-dimethylallyladenosine(37) in tRNA + (sulfur carrier)-SH + AH2 + 2 S-adenosyl-L-methionine = 2-methylsulfanyl-N(6)-dimethylallyladenosine(37) in tRNA + (sulfur carrier)-H + 5'-deoxyadenosine + L-methionine + A + S-adenosyl-L-homocysteine + 2 H(+). In terms of biological role, catalyzes the methylthiolation of N6-(dimethylallyl)adenosine (i(6)A), leading to the formation of 2-methylthio-N6-(dimethylallyl)adenosine (ms(2)i(6)A) at position 37 in tRNAs that read codons beginning with uridine. The protein is tRNA-2-methylthio-N(6)-dimethylallyladenosine synthase of Desulfitobacterium hafniense (strain Y51).